A 156-amino-acid chain; its full sequence is Small ribosomal subunit protein uS7 (156 aa).

The protein belongs to the universal ribosomal protein uS7 family. As to quaternary structure, part of the 30S ribosomal subunit. Contacts proteins S9 and S11.

One of the primary rRNA binding proteins, it binds directly to 16S rRNA where it nucleates assembly of the head domain of the 30S subunit. Is located at the subunit interface close to the decoding center, probably blocks exit of the E-site tRNA. In Haemophilus influenzae (strain 86-028NP), this protein is Small ribosomal subunit protein uS7.